The primary structure comprises 542 residues: Chaperonin GroEL 5 (542 aa).

ATP-binding positions include 30–33 (TLGP), Lys51, 87–91 (DGTTT), Gly415, and Asp496.

The protein belongs to the chaperonin (HSP60) family. Forms a cylinder of 14 subunits composed of two heptameric rings stacked back-to-back. Interacts with the co-chaperonin GroES.

Its subcellular location is the cytoplasm. The catalysed reaction is ATP + H2O + a folded polypeptide = ADP + phosphate + an unfolded polypeptide.. Functionally, together with its co-chaperonin GroES, plays an essential role in assisting protein folding. The GroEL-GroES system forms a nano-cage that allows encapsulation of the non-native substrate proteins and provides a physical environment optimized to promote and accelerate protein folding. This chain is Chaperonin GroEL 5, found in Rhizobium meliloti (strain 1021) (Ensifer meliloti).